A 200-amino-acid polypeptide reads, in one-letter code: Neutrophil gelatinase-associated lipocalin (200 aa).

A signal peptide spans 1 to 20 (MALSVMCLGLALLGVLQSQA). Gln-21 is subject to Pyrrolidone carboxylic acid. 72-74 (YST) is a binding site for a carboxymycobactin. 2 N-linked (GlcNAc...) asparagine glycosylation sites follow: Asn-81 and Asn-85. A disulfide bridge links Cys-98 with Cys-197. Tyr-128 lines the enterobactin pocket. A carboxymycobactin-binding residues include Lys-147, Lys-156, and Tyr-160. Position 156 (Lys-156) interacts with enterobactin.

Belongs to the calycin superfamily. Lipocalin family. Monomer. Homodimer; disulfide-linked. Heterodimer; disulfide-linked with MMP9. N-glycosylated. In terms of tissue distribution, expressed in the cortical tubules of the kidney (at protein level). Also expressed in the medullary tubules of the kidney. Detected in lung, spleen, uterus, vagina and epididymis.

Its subcellular location is the secreted. The protein localises to the cytoplasmic granule lumen. It localises to the cytoplasmic vesicle lumen. Functionally, iron-trafficking protein involved in multiple processes such as apoptosis, innate immunity and renal development. Binds iron through association with 2,3-dihydroxybenzoic acid (2,3-DHBA), a siderophore that shares structural similarities with bacterial enterobactin, and delivers or removes iron from the cell, depending on the context. Iron-bound form (holo-24p3) is internalized following binding to the SLC22A17 (24p3R) receptor, leading to release of iron and subsequent increase of intracellular iron concentration. In contrast, association of the iron-free form (apo-24p3) with the SLC22A17 (24p3R) receptor is followed by association with an intracellular siderophore, iron chelation and iron transfer to the extracellular medium, thereby reducing intracellular iron concentration. Involved in apoptosis due to interleukin-3 (IL3) deprivation: iron-loaded form increases intracellular iron concentration without promoting apoptosis, while iron-free form decreases intracellular iron levels, inducing expression of the proapoptotic protein BCL2L11/BIM, resulting in apoptosis. Involved in innate immunity; limits bacterial proliferation by sequestering iron bound to microbial siderophores, such as enterobactin. Can also bind siderophores from M.tuberculosis. This is Neutrophil gelatinase-associated lipocalin (Lcn2) from Mus musculus (Mouse).